The primary structure comprises 726 residues: Catalase-peroxidase (726 aa).

A disordered region spans residues 1 to 33 (MSTTDDTHNTLSTGKCPFHQGGHDRSAGAGTAS). The tryptophyl-tyrosyl-methioninium (Trp-Tyr) (with M-252) cross-link spans 105-226 (WHGAGTYRSI…LGATEMGLIY (122 aa)). Catalysis depends on His-106, which acts as the Proton acceptor. Residues 226–252 (YVNPEGPDHSGEPLSAAAAIRATFGNM) constitute a cross-link (tryptophyl-tyrosyl-methioninium (Tyr-Met) (with W-105)). His-267 contacts heme b.

Belongs to the peroxidase family. Peroxidase/catalase subfamily. As to quaternary structure, homodimer or homotetramer. It depends on heme b as a cofactor. Post-translationally, formation of the three residue Trp-Tyr-Met cross-link is important for the catalase, but not the peroxidase activity of the enzyme.

It catalyses the reaction H2O2 + AH2 = A + 2 H2O. The catalysed reaction is 2 H2O2 = O2 + 2 H2O. In terms of biological role, bifunctional enzyme with both catalase and broad-spectrum peroxidase activity. The sequence is that of Catalase-peroxidase from Salmonella choleraesuis (strain SC-B67).